Here is a 208-residue protein sequence, read N- to C-terminus: Crossover junction endodeoxyribonuclease RuvC (208 aa).

Residues Asp9, Glu70, and Asp143 contribute to the active site. Mg(2+) contacts are provided by Asp9, Glu70, and Asp143.

It belongs to the RuvC family. As to quaternary structure, homodimer which binds Holliday junction (HJ) DNA. The HJ becomes 2-fold symmetrical on binding to RuvC with unstacked arms; it has a different conformation from HJ DNA in complex with RuvA. In the full resolvosome a probable DNA-RuvA(4)-RuvB(12)-RuvC(2) complex forms which resolves the HJ. Mg(2+) serves as cofactor.

The protein resides in the cytoplasm. The catalysed reaction is Endonucleolytic cleavage at a junction such as a reciprocal single-stranded crossover between two homologous DNA duplexes (Holliday junction).. The RuvA-RuvB-RuvC complex processes Holliday junction (HJ) DNA during genetic recombination and DNA repair. Endonuclease that resolves HJ intermediates. Cleaves cruciform DNA by making single-stranded nicks across the HJ at symmetrical positions within the homologous arms, yielding a 5'-phosphate and a 3'-hydroxyl group; requires a central core of homology in the junction. The consensus cleavage sequence is 5'-(A/T)TT(C/G)-3'. Cleavage occurs on the 3'-side of the TT dinucleotide at the point of strand exchange. HJ branch migration catalyzed by RuvA-RuvB allows RuvC to scan DNA until it finds its consensus sequence, where it cleaves and resolves the cruciform DNA. This Leifsonia xyli subsp. xyli (strain CTCB07) protein is Crossover junction endodeoxyribonuclease RuvC.